The following is a 234-amino-acid chain: Ion-translocating oxidoreductase complex subunit E (234 aa).

5 consecutive transmembrane segments (helical) span residues 62–82 (LGLGLATMLVLTCTNTVISLF), 92–112 (IPIYVMIIATTVTAVQLLMNA), 116–136 (TLYQSLGIFIPLIVTNCIIIG), 151–171 (IWDGFSMGLGMALSLTILGAL), and 205–225 (SFLLFILPPGAFIGLGLLLAI).

Belongs to the NqrDE/RnfAE family. The complex is composed of six subunits: RnfA, RnfB, RnfC, RnfD, RnfE and RnfG.

Its subcellular location is the cell inner membrane. Its function is as follows. Part of a membrane-bound complex that couples electron transfer with translocation of ions across the membrane. The polypeptide is Ion-translocating oxidoreductase complex subunit E (Haemophilus influenzae (strain PittGG)).